The sequence spans 333 residues: Complement C1q and tumor necrosis factor-related protein 9 (333 aa).

A signal peptide spans 1–19 (MRIWWLLLVMGACTRSVFS). The disordered stretch occupies residues 22 to 194 (TCRQGHSGIP…GDRGEKGKVG (173 aa)). 3 consecutive Collagen-like domains span residues 24–82 (RQGH…DGRV), 84–130 (AKGI…KGEV), and 134–193 (GPEG…KGKV). Pro-31, Pro-34, and Pro-40 each carry 4-hydroxyproline. The segment covering 42–57 (RDGRDGAKGDKGDAGE) has biased composition (basic and acidic residues). 4-hydroxyproline is present on residues Pro-58, Pro-61, and Pro-64. Residues 67-88 (DGIRGEKGEPGADGRVEAKGIK) show a composition bias toward basic and acidic residues. 5-hydroxylysine is present on Lys-73. Residue Lys-73 is glycosylated (O-linked (Gal...) hydroxylysine). A 4-hydroxyproline mark is found at Pro-76 and Pro-115. A 5-hydroxylysine modification is found at Lys-127. O-linked (Gal...) hydroxylysine glycosylation occurs at Lys-127. Residues Pro-151, Pro-160, and Pro-175 each carry the 4-hydroxyproline modification. Over residues 183 to 193 (WKGDRGEKGKV) the composition is skewed to basic and acidic residues. The C1q domain maps to 197–333 (PLVPKSAFTV…FTGFLLFSSS (137 aa)).

In terms of assembly, multimers (predominantly trimers). Interacts with ADIPOQ via the C1q domain to form a heterotrimeric complex. Post-translationally, the isomeric forms of the hydroxylated amino acids could not be determined in the mass-spectrometric methods reported in PubMed:18787108 but are assumed on the basis of their occurrence in collagen-like domains. As to expression, expressed predominantly in adipose tissue. Females express higher levels than males.

It localises to the secreted. Its function is as follows. Probable adipokine. Activates AMPK, AKT, and p44/42 MAPK signaling pathways. The sequence is that of Complement C1q and tumor necrosis factor-related protein 9 (C1qtnf9) from Mus musculus (Mouse).